Reading from the N-terminus, the 132-residue chain is Iron-sulfur cluster assembly 1 homolog, mitochondrial (132 aa).

The N-terminal 15 residues, Met1–Ala15, are a transit peptide targeting the mitochondrion. Positions 60, 124, and 126 each coordinate Fe cation.

The protein belongs to the HesB/IscA family. In terms of assembly, homooligomer, forming a rod-shaped structure 24 nm in length that may arise through a double-helical assembly of subunits. Interacts with CRY4; CRY4 seems to be associated with the outside of the rod-shaped homooligomer. Does not interact with CRY1 or CRY2. Detected in retina, especially in the retinal ganglion layer, the inner nuclear layer and the outer nuclear layer. Detected in retina visual pigment cells (at protein level).

It is found in the mitochondrion. Involved in the maturation of mitochondrial 4Fe-4S proteins functioning late in the iron-sulfur cluster assembly pathway. Probably involved in the binding of an intermediate of Fe/S cluster assembly. Component of a putative magnetoreceptor complex formed by ISCA1 and CRY4, a member of the cryptochrome family that are known to be required for light-dependent magnetosensitivity in various orgnisms. The rod-like assembly may facilitate the perception of the Earth's weak magnetic field. Both ISCA1 and the complex with CRY4 have magnetic properties and are attracted to iron beads. When exposed to a magnetic field of 1 mT (superior to the natural magnetic field), over 50% of the rod-like complexes align more or less in parallel with the magnetic field at room temperature. The protein is Iron-sulfur cluster assembly 1 homolog, mitochondrial (ISCA1) of Columba livia (Rock dove).